The chain runs to 182 residues: Large ribosomal subunit protein uL5 (182 aa).

This sequence belongs to the universal ribosomal protein uL5 family. As to quaternary structure, part of the 50S ribosomal subunit; part of the 5S rRNA/L5/L18/L25 subcomplex. Contacts the 5S rRNA and the P site tRNA. Forms a bridge to the 30S subunit in the 70S ribosome.

Functionally, this is one of the proteins that bind and probably mediate the attachment of the 5S RNA into the large ribosomal subunit, where it forms part of the central protuberance. In the 70S ribosome it contacts protein S13 of the 30S subunit (bridge B1b), connecting the 2 subunits; this bridge is implicated in subunit movement. Contacts the P site tRNA; the 5S rRNA and some of its associated proteins might help stabilize positioning of ribosome-bound tRNAs. The polypeptide is Large ribosomal subunit protein uL5 (Nostoc sp. (strain PCC 7120 / SAG 25.82 / UTEX 2576)).